Here is a 125-residue protein sequence, read N- to C-terminus: MEYQFTHSIHGVVAKCSMDHEAFAGWLNTEITENPKELINIFAEIEKCRAAYPNHYECVFEGKEYSLFLDCDEVMVKANNLDDTFDESQIEDGFQFYDQESIAFCGLEDFENFLKAYQKFSKTYH.

Belongs to the UPF0231 family.

This chain is UPF0231 protein APL_0968, found in Actinobacillus pleuropneumoniae serotype 5b (strain L20).